We begin with the raw amino-acid sequence, 187 residues long: Holliday junction resolvase (187 aa).

Belongs to the RuvC family. Poxviruses-type subfamily. Mg(2+) is required as a cofactor. Post-translationally, acylated by palmitic acid group(s).

Its subcellular location is the membrane. Its function is as follows. Nuclease that specifically cleaves and resolves four-way DNA Holliday junctions into linear duplex products. The sequence is that of Holliday junction resolvase from Vaccinia virus (strain Ankara) (VACV).